The sequence spans 487 residues: N-succinylglutamate 5-semialdehyde dehydrogenase (487 aa).

Position 221–226 (221–226 (GSSRTG)) interacts with NAD(+). Active-site residues include Glu-244 and Cys-278.

It belongs to the aldehyde dehydrogenase family. AstD subfamily.

It catalyses the reaction N-succinyl-L-glutamate 5-semialdehyde + NAD(+) + H2O = N-succinyl-L-glutamate + NADH + 2 H(+). It functions in the pathway amino-acid degradation; L-arginine degradation via AST pathway; L-glutamate and succinate from L-arginine: step 4/5. In terms of biological role, catalyzes the NAD-dependent reduction of succinylglutamate semialdehyde into succinylglutamate. The polypeptide is N-succinylglutamate 5-semialdehyde dehydrogenase (Pseudomonas putida (strain ATCC 700007 / DSM 6899 / JCM 31910 / BCRC 17059 / LMG 24140 / F1)).